Here is a 437-residue protein sequence, read N- to C-terminus: ATP-dependent protease ATPase subunit HslU (437 aa).

ATP is bound by residues Val18, 60-65 (GVGKTE), Asp249, Glu315, and Arg387.

This sequence belongs to the ClpX chaperone family. HslU subfamily. In terms of assembly, a double ring-shaped homohexamer of HslV is capped on each side by a ring-shaped HslU homohexamer. The assembly of the HslU/HslV complex is dependent on binding of ATP.

The protein localises to the cytoplasm. ATPase subunit of a proteasome-like degradation complex; this subunit has chaperone activity. The binding of ATP and its subsequent hydrolysis by HslU are essential for unfolding of protein substrates subsequently hydrolyzed by HslV. HslU recognizes the N-terminal part of its protein substrates and unfolds these before they are guided to HslV for hydrolysis. The sequence is that of ATP-dependent protease ATPase subunit HslU from Rhodospirillum centenum (strain ATCC 51521 / SW).